The primary structure comprises 456 residues: Signal transduction histidine-protein kinase ArlS (456 aa).

2 helical membrane-spanning segments follow: residues 13–33 and 157–177; these read LITTLITFTTILLFCLIIIFF and IVALAFGLIATIITAGVSYIF. An HAMP domain is found at 179–232; the sequence is SQITKPIVTMSNKMNQIRRDGFQNKLELTTNYEETDNLIDTFNEMMYQIEESFN. One can recognise a Histidine kinase domain in the interval 240–456; sequence DASHELRTPL…TFKISFPVLN (217 aa). Residue histidine 243 is modified to Phosphohistidine; by autocatalysis.

Autophosphorylated.

It is found in the cell membrane. It carries out the reaction ATP + protein L-histidine = ADP + protein N-phospho-L-histidine.. Its function is as follows. Member of the two-component regulatory system ArlS/ArlR. ArlS probably functions as a sensor protein kinase which is autophosphorylated at a histidine residue and transfers its phosphate group to ArlR. In Staphylococcus epidermidis (strain ATCC 12228 / FDA PCI 1200), this protein is Signal transduction histidine-protein kinase ArlS (arlS).